Here is a 207-residue protein sequence, read N- to C-terminus: MDDNLQLGDSGVVKNVAKLGRRARLAAEQTSSLEESRHVRKSSSSTSMGEVPPPKPARRQGGWAEETSGSAKSGRRPAVVEDVEDRRLRPQTPQGSDDEGDIPVIPDLDEVQEEDLTMQVAAPPSIQVNRVMTYRDLDNDLMKYSAFQTLDGEIDLKLLTKVLAPEQEVREEDVGWDWDRLFTEVSSELLTEWDQGEKEEQVPLPVL.

Residues 1 to 104 (MDDNLQLGDS…GSDDEGDIPV (104 aa)) are disordered.

It belongs to the IFT43 family. In terms of assembly, component of IFT complex A.

Functionally, component of IFT complex A (IFT-A) involved in retrograde ciliary transport along microtubules from the ciliary tip to the base. The polypeptide is Intraflagellar transport protein 43 homolog A (ift43a) (Salmo salar (Atlantic salmon)).